The primary structure comprises 278 residues: Potassium/proton antiporter CemA (278 aa).

4 helical membrane passes run Y60–F80, A155–T175, F201–V221, and I239–F259.

Belongs to the CemA family.

The protein resides in the plastid. Its subcellular location is the chloroplast inner membrane. The catalysed reaction is K(+)(in) + H(+)(out) = K(+)(out) + H(+)(in). Functionally, contributes to K(+)/H(+) antiport activity by supporting proton efflux to control proton extrusion and homeostasis in chloroplasts in a light-dependent manner to modulate photosynthesis. Prevents excessive induction of non-photochemical quenching (NPQ) under continuous-light conditions. Indirectly promotes efficient inorganic carbon uptake into chloroplasts. The chain is Potassium/proton antiporter CemA from Rhodomonas salina (Cryptomonas salina).